The primary structure comprises 908 residues: MFGKLLTKVFGSRNDRTLKGLQKIVISINALEADYEKLTDEALKAKTAEFRERLAAGASLDSIMAEAFATVREASKRVFDMRHFDVQLLGGMVLDSNRIAEMRTGEGKTLTATLPAYLNALTGKGVHVITVNDYLARRDAENNRPLFEFLGLTVGINVAGLGQHEKKAAYNADITYGTNNEFGFDYLRDNMAFSPQERVQRPLHYALIDEVDSILIDEARTPLIISGAAEDSSELYIKINTLIPNLIRQDKEDTEEYVGEGDYSIDEKAKQVHFTERGQEKVENLLIERGMLAEGDSLYSAANISLLHHVNAALRAHTLFERDVDYIVQDNEVIIVDEHTGRTMPGRRWSEGLHQAVEAKEGVHIQNENQTLASITFQNYFRQYEKLAGMTGTADTEAFEFQHIYGLDTVVVPTNRPMVRKDMADLVYLTADEKYQAIIKDIKDCRERGQPVLVGTVSIEQSELLARLMVQEKIPHEVLNAKFHEREAEIVAQAGRTGSVTIATNMAGRGTDIVLGGNWNMEIDELDNPTAEQKAKIKADWQIRHDEVVAAGGLHILGTERHESRRIDNQLRGRAGRQGDAGSSRFYLSMEDSLMRIFASDRVSGMMKKLGMEEGEAIEHPWVSRAIENAQRKVEARNFDIRKQLLEFDDVANDQRQVVYAQRNELMDAESIEDTIQNIQDDVIGAVIDQYIPPQSVEELWDIPGLEQRLHQEFMLKLPIQEWLDKEDDLHEESLRERIITAWGDAYKAKEEMVGAQVLRQFEKAVMLQTLDGLWKEHLAAMDHLRQGIHLRGYAQKNPKQEYKRESFELFQQLLNTLKHDVISVLSKVQVQAQSDVEEMEARRREEDAKIQRDYQHAAAESLVGGGDEHEAVTAQAPMIRDGEKVGRNDPCPCGSGRKYKQCHGKLS.

Residues Gln-87, 105-109 (GEGKT), and Asp-512 contribute to the ATP site. The disordered stretch occupies residues 876 to 908 (QAPMIRDGEKVGRNDPCPCGSGRKYKQCHGKLS). Zn(2+) contacts are provided by Cys-892, Cys-894, Cys-903, and His-904. The segment covering 898–908 (RKYKQCHGKLS) has biased composition (basic residues).

The protein belongs to the SecA family. In terms of assembly, monomer and homodimer. Part of the essential Sec protein translocation apparatus which comprises SecA, SecYEG and auxiliary proteins SecDF-YajC and YidC. Zn(2+) serves as cofactor.

Its subcellular location is the cell inner membrane. It localises to the cytoplasm. It catalyses the reaction ATP + H2O + cellular proteinSide 1 = ADP + phosphate + cellular proteinSide 2.. Functionally, part of the Sec protein translocase complex. Interacts with the SecYEG preprotein conducting channel. Has a central role in coupling the hydrolysis of ATP to the transfer of proteins into and across the cell membrane, serving both as a receptor for the preprotein-SecB complex and as an ATP-driven molecular motor driving the stepwise translocation of polypeptide chains across the membrane. The sequence is that of Protein translocase subunit SecA from Shewanella baltica (strain OS185).